Here is a 122-residue protein sequence, read N- to C-terminus: Ribonuclease P protein component (122 aa).

Belongs to the RnpA family. In terms of assembly, consists of a catalytic RNA component (M1 or rnpB) and a protein subunit.

The catalysed reaction is Endonucleolytic cleavage of RNA, removing 5'-extranucleotides from tRNA precursor.. RNaseP catalyzes the removal of the 5'-leader sequence from pre-tRNA to produce the mature 5'-terminus. It can also cleave other RNA substrates such as 4.5S RNA. The protein component plays an auxiliary but essential role in vivo by binding to the 5'-leader sequence and broadening the substrate specificity of the ribozyme. This chain is Ribonuclease P protein component, found in Synechococcus elongatus (strain ATCC 33912 / PCC 7942 / FACHB-805) (Anacystis nidulans R2).